A 68-amino-acid chain; its full sequence is UPF0434 protein BTH_I0741 (68 aa).

Belongs to the UPF0434 family.

The chain is UPF0434 protein BTH_I0741 from Burkholderia thailandensis (strain ATCC 700388 / DSM 13276 / CCUG 48851 / CIP 106301 / E264).